The chain runs to 649 residues: Acetyl-coenzyme A synthetase (649 aa).

Residues 189 to 192, Thr311, and Asn335 contribute to the CoA site; that span reads RGGK. Residues 387–389, 411–416, Asp500, and Arg515 contribute to the ATP site; these read GEP and DTWWQT. A CoA-binding site is contributed by Ser523. Residue Arg526 participates in ATP binding. Positions 537, 539, and 542 each coordinate Mg(2+). Arg584 contributes to the CoA binding site. The residue at position 609 (Lys609) is an N6-acetyllysine.

The protein belongs to the ATP-dependent AMP-binding enzyme family. Requires Mg(2+) as cofactor. Acetylated. Deacetylation by the SIR2-homolog deacetylase activates the enzyme.

It catalyses the reaction acetate + ATP + CoA = acetyl-CoA + AMP + diphosphate. Functionally, catalyzes the conversion of acetate into acetyl-CoA (AcCoA), an essential intermediate at the junction of anabolic and catabolic pathways. AcsA undergoes a two-step reaction. In the first half reaction, AcsA combines acetate with ATP to form acetyl-adenylate (AcAMP) intermediate. In the second half reaction, it can then transfer the acetyl group from AcAMP to the sulfhydryl group of CoA, forming the product AcCoA. In Sinorhizobium fredii (strain NBRC 101917 / NGR234), this protein is Acetyl-coenzyme A synthetase.